The primary structure comprises 657 residues: Glycogen debranching enzyme (657 aa).

The active-site Nucleophile is aspartate 334. Glutamate 369 serves as the catalytic Proton donor. The segment at 458–485 is disordered; sequence ANGEQNRDGTNSNFSFNHGTEGLEADET. Over residues 465–475 the composition is skewed to polar residues; the sequence is DGTNSNFSFNH.

This sequence belongs to the glycosyl hydrolase 13 family.

The protein resides in the cytoplasm. It carries out the reaction Hydrolysis of (1-&gt;6)-alpha-D-glucosidic linkages to branches with degrees of polymerization of three or four glucose residues in limit dextrin.. Its pathway is glycan degradation; glycogen degradation. Its activity is regulated as follows. Slightly activated by Ca(2+). Inhibited by divalent cations such as Zn(2+), Cu(2+), Fe(2+), Mg(2+), Mn(2+), but only slightly inhibited by EDTA. Its function is as follows. Removes maltotriose and maltotetraose chains that are attached by 1,6-alpha-linkage to the limit dextrin main chain, generating a debranched limit dextrin. Hydrolyzes the alpha-1,6-glycosidic linkages in amylopectin while does not hydrolyze the alpha-1,4-glycosidic linkages in amylose. Native glycogen is a poor substrate. This Dickeya chrysanthemi (Pectobacterium chrysanthemi) protein is Glycogen debranching enzyme.